A 308-amino-acid chain; its full sequence is UDP-N-acetylenolpyruvoylglucosamine reductase (308 aa).

Residues 37–201 (RVGGPAQVLF…TQATFRGTPG (165 aa)) enclose the FAD-binding PCMH-type domain. Arginine 181 is a catalytic residue. A compositionally biased stretch (polar residues) spans 216-233 (SREATQPIKSRTGGSTFK). Positions 216 to 236 (SREATQPIKSRTGGSTFKNPP) are disordered. Serine 230 (proton donor) is an active-site residue. Glutamate 300 is a catalytic residue.

This sequence belongs to the MurB family. Requires FAD as cofactor.

It is found in the cytoplasm. The enzyme catalyses UDP-N-acetyl-alpha-D-muramate + NADP(+) = UDP-N-acetyl-3-O-(1-carboxyvinyl)-alpha-D-glucosamine + NADPH + H(+). Its pathway is cell wall biogenesis; peptidoglycan biosynthesis. Functionally, cell wall formation. In Azorhizobium caulinodans (strain ATCC 43989 / DSM 5975 / JCM 20966 / LMG 6465 / NBRC 14845 / NCIMB 13405 / ORS 571), this protein is UDP-N-acetylenolpyruvoylglucosamine reductase.